The sequence spans 487 residues: Beta-barrel assembly-enhancing protease (487 aa).

The signal sequence occupies residues 1–27; sequence MFRQLKKNLVATLIAAMTIGQVAPAFA. Position 136 (histidine 136) interacts with Zn(2+). Glutamate 137 is a catalytic residue. Positions 140 and 201 each coordinate Zn(2+). Catalysis depends on aspartate 205, which acts as the Proton donor. 4 TPR repeats span residues 309–342, 344–376, 377–409, and 427–460; these read RAAQ…EPGN, WYLD…RTNP, VLQL…NKDD, and DQEL…VKLG.

It belongs to the peptidase M48 family. BepA subfamily. As to quaternary structure, interacts with BamA and LoiP. Zn(2+) is required as a cofactor.

The protein localises to the periplasm. Protease activity is inhibited by the metal chelating reagents 1,10-phenanthroline and EDTA. In terms of biological role, functions both as a chaperone and a metalloprotease. Maintains the integrity of the outer membrane by promoting either the assembly or the elimination of outer membrane proteins, depending on their folding state. Promotes disulfide rearrangement of LptD during its biogenesis, and proteolytic degradation of LptD and BamA when their proper assembly is compromised. May facilitate membrane attachment of LoiP under unfavorable conditions. In Escherichia coli (strain K12), this protein is Beta-barrel assembly-enhancing protease.